A 283-amino-acid chain; its full sequence is CDP-abequose synthase (283 aa).

Residues 7–13 (GGSGYIG), 48–49 (EF), Tyr129, and Lys133 each bind NAD(+). Tyr129 serves as the catalytic Proton acceptor.

Belongs to the NAD(P)-dependent epimerase/dehydratase family.

The catalysed reaction is CDP-alpha-D-abequose + NADP(+) = CDP-4-dehydro-3,6-dideoxy-alpha-D-glucose + NADPH + H(+). It participates in bacterial outer membrane biogenesis; LPS O-antigen biosynthesis. The CDP-abequose synthase is involved in lipopolysaccharides (LPS) synthesis containing abequose which are important antigens of the cell surface responsible for the serological O specificity. Derivatives of the 3,6-dideoxyhexose group have a particular highly immunogenic character. This is CDP-abequose synthase (rfbJ) from Yersinia pseudotuberculosis.